The sequence spans 262 residues: Homeobox-leucine zipper protein HOX24 (262 aa).

2 disordered regions span residues alanine 44 to arginine 68 and leucine 162 to methionine 189. A compositionally biased stretch (gly residues) spans glycine 46 to glycine 62. A DNA-binding region (homeobox) is located at residues glycine 61–glutamine 122. The interval lysine 121–arginine 165 is leucine-zipper.

The protein belongs to the HD-ZIP homeobox family. Class I subfamily. In terms of tissue distribution, expressed in roots and panicles.

It is found in the nucleus. Probable transcription factor. This chain is Homeobox-leucine zipper protein HOX24 (HOX24), found in Oryza sativa subsp. indica (Rice).